The chain runs to 179 residues: Small ribosomal subunit protein uS7 (179 aa).

The protein belongs to the universal ribosomal protein uS7 family. As to quaternary structure, part of the 30S ribosomal subunit. Contacts proteins S9 and S11. Cross-links to IF3 and the P and E site tRNAs.

Functionally, one of the primary rRNA binding proteins, it binds directly to 16S rRNA where it nucleates assembly of the head domain of the 30S subunit. Is located at the subunit interface close to the decoding center, where it has been shown to contact mRNA. Has been shown to contact tRNA in both the P and E sites; it probably blocks exit of the E site tRNA. Its function is as follows. Protein S7 is also a translational repressor protein; it regulates the expression of the str operon members to different degrees by binding to its mRNA. This is Small ribosomal subunit protein uS7 (rpsG) from Escherichia coli (strain K12).